Reading from the N-terminus, the 601-residue chain is Glutathione-regulated potassium-efflux system protein KefB (601 aa).

The next 13 helical transmembrane spans lie at 4–24 (SDFL…VPLA), 29–49 (IGAV…GLGF), 55–75 (EILH…GLEL), 87–107 (IFGV…GLLM), 115–135 (AAVV…LQLM), 152–172 (VLLF…LLAG), 177–197 (HFDW…LIGG), 207–227 (FIAA…LVLG), 230–250 (LFMD…GVLL), 268–288 (GLLL…GVLY), 291–311 (LLWV…VLYL), 324–344 (MQFA…FSTA), and 356–376 (ALLL…MKLV). One can recognise an RCK N-terminal domain in the interval 400–519 (KPQVIVVGFG…AGVTQFSRET (120 aa)).

This sequence belongs to the monovalent cation:proton antiporter 2 (CPA2) transporter (TC 2.A.37) family. KefB subfamily. As to quaternary structure, interacts with the regulatory subunit KefG.

The protein resides in the cell inner membrane. Its function is as follows. Pore-forming subunit of a potassium efflux system that confers protection against electrophiles. Catalyzes K(+)/H(+) antiport. This chain is Glutathione-regulated potassium-efflux system protein KefB, found in Escherichia coli O17:K52:H18 (strain UMN026 / ExPEC).